The sequence spans 62 residues: UPF0337 protein gsr0040 (62 aa).

Basic and acidic residues-rich tracts occupy residues 1 to 15 (MGID…KDVQ) and 27 to 62 (DDPK…IDNV). The tract at residues 1–62 (MGIDKRAEAT…DQAHRTIDNV (62 aa)) is disordered.

Belongs to the UPF0337 (CsbD) family.

The protein is UPF0337 protein gsr0040 of Gloeobacter violaceus (strain ATCC 29082 / PCC 7421).